A 92-amino-acid chain; its full sequence is Costars family protein ST45-2 (92 aa).

Position 1 is an N-acetylmethionine (methionine 1).

The protein belongs to the costars family.

The protein is Costars family protein ST45-2 of Eutrema halophilum (Salt cress).